The primary structure comprises 161 residues: Putative esterase C31F10.02 (161 aa).

It belongs to the thioesterase PaaI family.

This Schizosaccharomyces pombe (strain 972 / ATCC 24843) (Fission yeast) protein is Putative esterase C31F10.02.